Reading from the N-terminus, the 550-residue chain is Cytochrome P450 monooxygenase FFUJ_09176 (550 aa).

The first 31 residues, 1–31 (MLQTIPMPSRELTIALAVLSLLMVLVQRAGS), serve as a signal peptide directing secretion. The segment covering 430 to 441 (FIPERFEGDTRS) has biased composition (basic and acidic residues). The interval 430-451 (FIPERFEGDTRSSQESAASPDV) is disordered. Cys-466 is a heme binding site.

The protein belongs to the cytochrome P450 family.

Functionally, cytochrome P450 monooxygenase; part of the DMATS1 gene cluster that mediates the biosynthesis of a reversely N-prenylated monomeric L-tryptophan (r-N-DMAT). Seems not to contribute to the final DMATS1 product. This is Cytochrome P450 monooxygenase FFUJ_09176 from Gibberella fujikuroi (strain CBS 195.34 / IMI 58289 / NRRL A-6831) (Bakanae and foot rot disease fungus).